We begin with the raw amino-acid sequence, 556 residues long: 2-succinyl-5-enolpyruvyl-6-hydroxy-3-cyclohexene-1-carboxylate synthase (556 aa).

This sequence belongs to the TPP enzyme family. MenD subfamily. In terms of assembly, homodimer. Requires Mg(2+) as cofactor. Mn(2+) serves as cofactor. The cofactor is thiamine diphosphate.

The catalysed reaction is isochorismate + 2-oxoglutarate + H(+) = 5-enolpyruvoyl-6-hydroxy-2-succinyl-cyclohex-3-ene-1-carboxylate + CO2. Its pathway is quinol/quinone metabolism; 1,4-dihydroxy-2-naphthoate biosynthesis; 1,4-dihydroxy-2-naphthoate from chorismate: step 2/7. It participates in quinol/quinone metabolism; menaquinone biosynthesis. Its function is as follows. Catalyzes the thiamine diphosphate-dependent decarboxylation of 2-oxoglutarate and the subsequent addition of the resulting succinic semialdehyde-thiamine pyrophosphate anion to isochorismate to yield 2-succinyl-5-enolpyruvyl-6-hydroxy-3-cyclohexene-1-carboxylate (SEPHCHC). The sequence is that of 2-succinyl-5-enolpyruvyl-6-hydroxy-3-cyclohexene-1-carboxylate synthase from Escherichia coli O17:K52:H18 (strain UMN026 / ExPEC).